We begin with the raw amino-acid sequence, 197 residues long: Xanthine phosphoribosyltransferase (197 aa).

Positions 20 and 27 each coordinate xanthine. 128-132 (ANGQA) contributes to the 5-phospho-alpha-D-ribose 1-diphosphate binding site. K156 is a binding site for xanthine.

Belongs to the purine/pyrimidine phosphoribosyltransferase family. Xpt subfamily. In terms of assembly, homodimer.

Its subcellular location is the cytoplasm. The enzyme catalyses XMP + diphosphate = xanthine + 5-phospho-alpha-D-ribose 1-diphosphate. It participates in purine metabolism; XMP biosynthesis via salvage pathway; XMP from xanthine: step 1/1. In terms of biological role, converts the preformed base xanthine, a product of nucleic acid breakdown, to xanthosine 5'-monophosphate (XMP), so it can be reused for RNA or DNA synthesis. In Bacillus cereus (strain ATCC 10987 / NRS 248), this protein is Xanthine phosphoribosyltransferase.